Reading from the N-terminus, the 166-residue chain is Lipoprotein signal peptidase (166 aa).

3 helical membrane-spanning segments follow: residues 12–32 (WLWL…LILQ), 70–90 (WFFA…MYRS), and 102–122 (ALII…GFVV). Active-site residues include Asp123 and Asp141. The helical transmembrane segment at 137–157 (FNLADTAICIGAALIVLEGFL) threads the bilayer.

It belongs to the peptidase A8 family.

It localises to the cell inner membrane. It carries out the reaction Release of signal peptides from bacterial membrane prolipoproteins. Hydrolyzes -Xaa-Yaa-Zaa-|-(S,diacylglyceryl)Cys-, in which Xaa is hydrophobic (preferably Leu), and Yaa (Ala or Ser) and Zaa (Gly or Ala) have small, neutral side chains.. The protein operates within protein modification; lipoprotein biosynthesis (signal peptide cleavage). In terms of biological role, this protein specifically catalyzes the removal of signal peptides from prolipoproteins. The sequence is that of Lipoprotein signal peptidase from Salmonella typhi.